The following is a 265-amino-acid chain: Glutamate racemase (265 aa).

Residues 9 to 10 and 41 to 42 contribute to the substrate site; these read DS and YG. C72 functions as the Proton donor/acceptor in the catalytic mechanism. Substrate is bound at residue 73 to 74; the sequence is NT. The Proton donor/acceptor role is filled by C183. 184–185 contributes to the substrate binding site; the sequence is TH.

It belongs to the aspartate/glutamate racemases family.

The catalysed reaction is L-glutamate = D-glutamate. It participates in cell wall biogenesis; peptidoglycan biosynthesis. Functionally, provides the (R)-glutamate required for cell wall biosynthesis. The chain is Glutamate racemase from Lysinibacillus sphaericus (Bacillus sphaericus).